Reading from the N-terminus, the 234-residue chain is Demethylmenaquinone methyltransferase (234 aa).

S-adenosyl-L-methionine is bound by residues threonine 58, aspartate 79, and 106–107 (NA).

This sequence belongs to the class I-like SAM-binding methyltransferase superfamily. MenG/UbiE family.

It carries out the reaction a 2-demethylmenaquinol + S-adenosyl-L-methionine = a menaquinol + S-adenosyl-L-homocysteine + H(+). It functions in the pathway quinol/quinone metabolism; menaquinone biosynthesis; menaquinol from 1,4-dihydroxy-2-naphthoate: step 2/2. In terms of biological role, methyltransferase required for the conversion of demethylmenaquinol (DMKH2) to menaquinol (MKH2). This is Demethylmenaquinone methyltransferase from Geobacillus sp. (strain WCH70).